A 173-amino-acid polypeptide reads, in one-letter code: Alpha-crystallin A chain (173 aa).

Met1 bears the N-acetylmethionine mark. The interval 1–63 (MDVTIQHPWF…RTVLDSGISE (63 aa)) is required for complex formation with BFSP1 and BFSP2. Gln6 carries the deamidated glutamine; partial modification. The residue at position 45 (Ser45) is a Phosphoserine. Gln50 bears the Deamidated glutamine; partial mark. Positions 52 to 162 (LFRTVLDSGI…GHSERAIPVS (111 aa)) constitute a sHSP domain. Lys99 is modified (N6-acetyllysine). Residue His100 participates in Zn(2+) binding. At Asn101 the chain carries Deamidated asparagine; partial. Residues Glu102 and His107 each coordinate Zn(2+). A Phosphoserine modification is found at Ser122. Asn123 is modified (deamidated asparagine; partial). An intrachain disulfide couples Cys131 to Cys142. Residues 146–173 (VQSSMDDGHSERAIPVSREEKPSSVPSS) form a disordered region. At Gln147 the chain carries Deamidated glutamine; partial. Positions 151–167 (DDGHSERAIPVSREEKP) are enriched in basic and acidic residues. His154 serves as a coordination point for Zn(2+). O-linked (GlcNAc) serine glycosylation occurs at Ser162.

This sequence belongs to the small heat shock protein (HSP20) family. As to quaternary structure, heteromer composed of three CRYAA and one CRYAB subunits. Inter-subunit bridging via zinc ions enhances stability, which is crucial as there is no protein turn over in the lens. Can also form homodimers and homotetramers (dimers of dimers) which serve as the building blocks of homooligomers. Within homooligomers, the zinc-binding motif is created from residues of 3 different molecules. His-100 and Glu-102 from one molecule are ligands of the zinc ion, and His-107 and His-154 residues from additional molecules complete the site with tetrahedral coordination geometry. Part of a complex required for lens intermediate filament formation composed of BFSP1, BFSP2 and CRYAA. In terms of processing, undergoes age-dependent proteolytical cleavage at the C-terminus.

The protein localises to the cytoplasm. It localises to the nucleus. Functionally, contributes to the transparency and refractive index of the lens. In its oxidized form (absence of intramolecular disulfide bond), acts as a chaperone, preventing aggregation of various proteins under a wide range of stress conditions. Required for the correct formation of lens intermediate filaments as part of a complex composed of BFSP1, BFSP2 and CRYAA. The chain is Alpha-crystallin A chain (CRYAA) from Orycteropus afer (Aardvark).